The chain runs to 500 residues: Glucose-6-phosphate 1-dehydrogenase (500 aa).

Residues 18–25 (GASGDLSK), arginine 52, and lysine 155 contribute to the NADP(+) site. Residues lysine 155, 185–189 (HYLGK), glutamate 223, and aspartate 242 contribute to the D-glucose 6-phosphate site. Histidine 247 (proton acceptor) is an active-site residue. An NADP(+)-binding site is contributed by lysine 338. Residue lysine 341 coordinates D-glucose 6-phosphate. 3 residues coordinate NADP(+): lysine 347, arginine 351, and arginine 373. D-glucose 6-phosphate is bound at residue glutamine 375. NADP(+) contacts are provided by residues 381–383 (YFK), 401–403 (DLT), and tyrosine 483.

Belongs to the glucose-6-phosphate dehydrogenase family.

The protein resides in the cytoplasm. Its subcellular location is the cytosol. It carries out the reaction D-glucose 6-phosphate + NADP(+) = 6-phospho-D-glucono-1,5-lactone + NADPH + H(+). Its pathway is carbohydrate degradation; pentose phosphate pathway; D-ribulose 5-phosphate from D-glucose 6-phosphate (oxidative stage): step 1/3. Its function is as follows. Catalyzes the rate-limiting step of the oxidative pentose-phosphate pathway, which represents a route for the dissimilation of carbohydrates besides glycolysis. The main function of this enzyme is to provide reducing power (NADPH) and pentose phosphates for fatty acid and nucleic acid synthesis. The chain is Glucose-6-phosphate 1-dehydrogenase from Schizosaccharomyces pombe (strain 972 / ATCC 24843) (Fission yeast).